The chain runs to 132 residues: UPF0102 protein LI0223 (132 aa).

The protein belongs to the UPF0102 family.

The sequence is that of UPF0102 protein LI0223 from Lawsonia intracellularis (strain PHE/MN1-00).